The primary structure comprises 679 residues: F-box/LRR-repeat protein 5 (679 aa).

Positions 1–159 (MAPFPDEVDV…IKQQVMLQHC (159 aa)) are hemerythrin-like. His15, His57, Glu58, Glu61, His80, His126, and Glu130 together coordinate Fe(3+). An F-box domain is found at 205–251 (RVSVSSLPQELLLRIFRFLGPQDLCRCAQVCSVWTQVTRTGSLWRHL). 7 LRR repeats span residues 316–342 (EKLL…SLAY), 343–367 (SSTL…LDLT), 368–395 (QTDV…DLSG), 396–426 (CDKI…LLQA), 565–595 (CWFE…SLSG), 596–623 (CHQI…NLSG), and 624–649 (CPLI…HFYY). Residues Cys650, Cys664, Cys674, and Cys675 each coordinate [2Fe-2S] cluster.

In terms of assembly, part of a SCF (SKP1-cullin-F-box) protein ligase complex. The cofactor is [2Fe-2S] cluster. Ubiquitinated upon iron and oxygen depletion, leading to its degradation by the proteasome. Ubiquitination is regulated by the hemerythrin-like region that acts as an oxygen and iron sensor.

Its subcellular location is the cytoplasm. The protein localises to the perinuclear region. It localises to the nucleus. The protein operates within protein modification; protein ubiquitination. Functionally, component of some SCF (SKP1-cullin-F-box) protein ligase complex that plays a central role in iron homeostasis by promoting the ubiquitination and subsequent degradation of ireb2/irp2. Upon high iron and oxygen level, it specifically recognizes and binds ireb2/irp2, promoting its ubiquitination and degradation by the proteasome. This chain is F-box/LRR-repeat protein 5 (fbxl5), found in Danio rerio (Zebrafish).